Consider the following 336-residue polypeptide: uncharacterized protein (336 aa).

A disordered region spans residues 196–222 (YKEGDDSNWDDFGSESEDDSKEAHSEE). A compositionally biased stretch (acidic residues) spans 201–215 (DSNWDDFGSESEDDS). A Phosphoserine modification is found at S211.

This is an uncharacterized protein from Schizosaccharomyces pombe (strain 972 / ATCC 24843) (Fission yeast).